Reading from the N-terminus, the 510-residue chain is Monocarboxylate transporter 14 (510 aa).

Over 1–27 (MYTSHEDIGYDFEDGPKDKKTLKPHPN) the chain is Cytoplasmic. The next 6 helical transmembrane spans lie at 28–48 (IDGG…ILIM), 74–94 (WVSS…GLFI), 103–123 (AIIG…AANV), 127–147 (FITF…PAVV), 159–179 (LAQG…TVLL), and 191–209 (AMLI…GALM). The segment at 214 to 255 (PGKNPNDPGEKDVRGLPAHSTESVKSTGQQGRTEEKDGGLGN) is disordered. Positions 233-244 (STESVKSTGQQG) are enriched in polar residues. 6 helical membrane-spanning segments follow: residues 315 to 335 (MFVA…IPFI), 353 to 373 (FPLT…LGVI), 379 to 399 (ISVW…IFIL), 408 to 428 (LAVI…MPVV), 443 to 463 (GIII…AGWI), and 474 to 494 (FYIC…QPCI). The Cytoplasmic segment spans residues 495–510 (RIIEQSRRKYMDGAHV).

The protein belongs to the major facilitator superfamily. Monocarboxylate porter (TC 2.A.1.13) family.

It is found in the cell membrane. Its function is as follows. Proton-linked monocarboxylate transporter. May catalyze the transport of monocarboxylates across the plasma membrane. This is Monocarboxylate transporter 14 (SLC16A14) from Homo sapiens (Human).